The following is a 502-amino-acid chain: Ubiquitin-like-specific protease 1A (502 aa).

Catalysis depends on residues His-393, Asp-410, and Cys-461.

This sequence belongs to the peptidase C48 family.

Functionally, protease that catalyzes two essential functions in the SUMO pathway: processing of full-length SUMOs to their mature forms and deconjugation of SUMO from targeted proteins. Cleaves precursors of SUM1 and SUM2, and very inefficiently of SUM3. Seems to be the only ULP1 able to cleave SUM3 precursors. Cleaves SUMO peptides better than SUMO-conjugated proteins. This Arabidopsis thaliana (Mouse-ear cress) protein is Ubiquitin-like-specific protease 1A (ULP1A).